The chain runs to 1956 residues: Histone-lysine N-methyltransferase SETD1B (1956 aa).

Residues 1-20 (MSFKEAKPGERGKNPEDHGR) are compositionally biased toward basic and acidic residues. The segment at 1 to 46 (MSFKEAKPGERGKNPEDHGRKQTASWINGMEAGNQPSTSGEKKSHH) is disordered. One can recognise an RRM domain in the interval 111–199 (DEFYVGPVPP…NIIHVELDTK (89 aa)). Disordered regions lie at residues 226-478 (LDAS…LEAE), 502-637 (IAGD…VTPS), 662-696 (GFPP…VTVP), 926-1148 (KEPP…DEMQ), 1341-1386 (EDLP…TLTS), 1420-1464 (PTFP…VPSP), 1512-1553 (HLTS…NYET), 1627-1655 (TKHK…FSPP), and 1766-1790 (IDTQ…RRSE). Polar residues-rich tracts occupy residues 254 to 290 (VTPN…QGTP), 298 to 312 (PFSQ…QTTP), and 346 to 361 (SSGS…NVTR). The span at 363-373 (QPEPVQVPRTP) shows a compositional bias: pro residues. Polar residues-rich tracts occupy residues 375–407 (LSHS…PQTS), 416–432 (GPQT…NSAS), and 451–464 (DSTT…SQTP). The span at 517-527 (SPISSSSSQLS) shows a compositional bias: low complexity. Polar residues-rich tracts occupy residues 535–551 (GSRY…SSTG) and 575–593 (SLCQ…NQSG). Positions 594–605 (RKTESLDKKELV) are enriched in basic and acidic residues. Positions 625–634 (EDMEISDDEV) are enriched in acidic residues. Over residues 986 to 1000 (SEGEEEVESEGDDGE) the composition is skewed to acidic residues. The span at 1001–1011 (TSDKEDSSSEK) shows a compositional bias: basic and acidic residues. Over residues 1068–1122 (DSSDESEESSEYESSSDSDEKEEEDDEEEELVFGDDQSEDQDLGQEYEVETDREE) the composition is skewed to acidic residues. A compositionally biased stretch (basic and acidic residues) spans 1341 to 1352 (EDLPRTPGRDIV). Composition is skewed to polar residues over residues 1358–1367 (LGKSQSTETV) and 1450–1462 (EPTS…NSVP). Residues 1541-1551 (SAHEFETEKNY) show a composition bias toward basic and acidic residues. Positions 1628–1638 (KHKKSRNSRHN) are enriched in basic residues. Residues 1769 to 1783 (QGKSIPAQPQASTRA) are compositionally biased toward polar residues. The RxxxRR motif signature appears at 1788 to 1793 (RSEQRR). One can recognise an SET domain in the interval 1817 to 1934 (KKLRFCKSHI…VNEEITYDYK (118 aa)). Tyr-1933 serves as a coordination point for S-adenosyl-L-methionine. A Post-SET domain is found at 1940 to 1956 (VKIPCLCGAENCRGTLN).

Belongs to the class V-like SAM-binding methyltransferase superfamily. Component of the SET1B/COMPASS complex.

The protein resides in the nucleus speckle. It localises to the chromosome. It carries out the reaction L-lysyl(4)-[histone H3] + 3 S-adenosyl-L-methionine = N(6),N(6),N(6)-trimethyl-L-lysyl(4)-[histone H3] + 3 S-adenosyl-L-homocysteine + 3 H(+). Its function is as follows. Histone methyltransferase that specifically methylates 'Lys-4' of histone H3, when part of the SET1 histone methyltransferase (HMT) complex, but not if the neighboring 'Lys-9' residue is already methylated. H3 'Lys-4' methylation represents a specific tag for epigenetic transcriptional activation. The protein is Histone-lysine N-methyltransferase SETD1B (setd1b) of Xenopus tropicalis (Western clawed frog).